The chain runs to 211 residues: Thiamine-phosphate synthase (211 aa).

Residues 38–42 (QLREK) and N70 each bind 4-amino-2-methyl-5-(diphosphooxymethyl)pyrimidine. The Mg(2+) site is built by D71 and D90. Residue S109 participates in 4-amino-2-methyl-5-(diphosphooxymethyl)pyrimidine binding. 135–137 (TST) contacts 2-[(2R,5Z)-2-carboxy-4-methylthiazol-5(2H)-ylidene]ethyl phosphate. K138 contacts 4-amino-2-methyl-5-(diphosphooxymethyl)pyrimidine. Residues G165 and 185 to 186 (IS) contribute to the 2-[(2R,5Z)-2-carboxy-4-methylthiazol-5(2H)-ylidene]ethyl phosphate site.

The protein belongs to the thiamine-phosphate synthase family. Mg(2+) is required as a cofactor.

It carries out the reaction 2-[(2R,5Z)-2-carboxy-4-methylthiazol-5(2H)-ylidene]ethyl phosphate + 4-amino-2-methyl-5-(diphosphooxymethyl)pyrimidine + 2 H(+) = thiamine phosphate + CO2 + diphosphate. The enzyme catalyses 2-(2-carboxy-4-methylthiazol-5-yl)ethyl phosphate + 4-amino-2-methyl-5-(diphosphooxymethyl)pyrimidine + 2 H(+) = thiamine phosphate + CO2 + diphosphate. The catalysed reaction is 4-methyl-5-(2-phosphooxyethyl)-thiazole + 4-amino-2-methyl-5-(diphosphooxymethyl)pyrimidine + H(+) = thiamine phosphate + diphosphate. It participates in cofactor biosynthesis; thiamine diphosphate biosynthesis; thiamine phosphate from 4-amino-2-methyl-5-diphosphomethylpyrimidine and 4-methyl-5-(2-phosphoethyl)-thiazole: step 1/1. Its function is as follows. Condenses 4-methyl-5-(beta-hydroxyethyl)thiazole monophosphate (THZ-P) and 2-methyl-4-amino-5-hydroxymethyl pyrimidine pyrophosphate (HMP-PP) to form thiamine monophosphate (TMP). The chain is Thiamine-phosphate synthase from Clostridium acetobutylicum (strain ATCC 824 / DSM 792 / JCM 1419 / IAM 19013 / LMG 5710 / NBRC 13948 / NRRL B-527 / VKM B-1787 / 2291 / W).